A 68-amino-acid polypeptide reads, in one-letter code: Molybdenum-pterin-binding protein 3 (68 aa).

Positions 2-68 (SISARNQLKG…IKSTDVMILA (67 aa)) constitute a Mop domain.

Binds one mole of molybdenum per mole of protein and contains a pterin. The sequence is that of Molybdenum-pterin-binding protein 3 (mopIII) from Clostridium pasteurianum.